Reading from the N-terminus, the 418-residue chain is Enolase (418 aa).

Gln162 contributes to the (2R)-2-phosphoglycerate binding site. Glu204 acts as the Proton donor in catalysis. Mg(2+) is bound by residues Asp241, Glu283, and Asp309. Positions 334, 363, 364, and 385 each coordinate (2R)-2-phosphoglycerate. Lys334 acts as the Proton acceptor in catalysis.

It belongs to the enolase family. The cofactor is Mg(2+).

It localises to the cytoplasm. The protein localises to the secreted. It is found in the cell surface. The enzyme catalyses (2R)-2-phosphoglycerate = phosphoenolpyruvate + H2O. It participates in carbohydrate degradation; glycolysis; pyruvate from D-glyceraldehyde 3-phosphate: step 4/5. Functionally, catalyzes the reversible conversion of 2-phosphoglycerate (2-PG) into phosphoenolpyruvate (PEP). It is essential for the degradation of carbohydrates via glycolysis. The chain is Enolase from Pelagibacter ubique (strain HTCC1062).